Consider the following 447-residue polypeptide: Phosphoglucosamine mutase (447 aa).

The Phosphoserine intermediate role is filled by S100. Mg(2+) is bound by residues S100, D239, D241, and D243. A Phosphoserine modification is found at S100.

Belongs to the phosphohexose mutase family. Mg(2+) serves as cofactor. In terms of processing, activated by phosphorylation.

It catalyses the reaction alpha-D-glucosamine 1-phosphate = D-glucosamine 6-phosphate. Catalyzes the conversion of glucosamine-6-phosphate to glucosamine-1-phosphate. The protein is Phosphoglucosamine mutase of Thermoanaerobacter pseudethanolicus (strain ATCC 33223 / 39E) (Clostridium thermohydrosulfuricum).